The following is a 631-amino-acid chain: ESX-3 secretion system protein EccA3 (631 aa).

Residue 385 to 392 (GPPGTGKT) coordinates ATP.

It belongs to the CbxX/CfxQ family. In terms of assembly, part of the ESX-3 / type VII secretion system (T7SS), which is composed of cytosolic and membrane components.

It is found in the cytoplasm. In terms of biological role, part of the ESX-3 specialized secretion system, which is important for iron and zinc uptake or homeostasis. EccA3 exhibits ATPase activity and may provide energy for the export of ESX-3 substrates. The chain is ESX-3 secretion system protein EccA3 from Mycobacterium tuberculosis (strain CDC 1551 / Oshkosh).